The chain runs to 361 residues: Protein RecA (361 aa).

77–84 lines the ATP pocket; sequence GPESSGKT.

This sequence belongs to the RecA family.

Its subcellular location is the cytoplasm. Can catalyze the hydrolysis of ATP in the presence of single-stranded DNA, the ATP-dependent uptake of single-stranded DNA by duplex DNA, and the ATP-dependent hybridization of homologous single-stranded DNAs. It interacts with LexA causing its activation and leading to its autocatalytic cleavage. The sequence is that of Protein RecA from Sinorhizobium fredii (strain NBRC 101917 / NGR234).